Consider the following 155-residue polypeptide: SsrA-binding protein (155 aa).

The protein belongs to the SmpB family.

The protein localises to the cytoplasm. Required for rescue of stalled ribosomes mediated by trans-translation. Binds to transfer-messenger RNA (tmRNA), required for stable association of tmRNA with ribosomes. tmRNA and SmpB together mimic tRNA shape, replacing the anticodon stem-loop with SmpB. tmRNA is encoded by the ssrA gene; the 2 termini fold to resemble tRNA(Ala) and it encodes a 'tag peptide', a short internal open reading frame. During trans-translation Ala-aminoacylated tmRNA acts like a tRNA, entering the A-site of stalled ribosomes, displacing the stalled mRNA. The ribosome then switches to translate the ORF on the tmRNA; the nascent peptide is terminated with the 'tag peptide' encoded by the tmRNA and targeted for degradation. The ribosome is freed to recommence translation, which seems to be the essential function of trans-translation. This is SsrA-binding protein from Ligilactobacillus salivarius (strain UCC118) (Lactobacillus salivarius).